A 287-amino-acid polypeptide reads, in one-letter code: Bifunctional protein FolD 2 (287 aa).

NADP(+)-binding positions include 166 to 168 and Ile-232; that span reads GAS.

It belongs to the tetrahydrofolate dehydrogenase/cyclohydrolase family. In terms of assembly, homodimer.

It catalyses the reaction (6R)-5,10-methylene-5,6,7,8-tetrahydrofolate + NADP(+) = (6R)-5,10-methenyltetrahydrofolate + NADPH. The catalysed reaction is (6R)-5,10-methenyltetrahydrofolate + H2O = (6R)-10-formyltetrahydrofolate + H(+). It participates in one-carbon metabolism; tetrahydrofolate interconversion. In terms of biological role, catalyzes the oxidation of 5,10-methylenetetrahydrofolate to 5,10-methenyltetrahydrofolate and then the hydrolysis of 5,10-methenyltetrahydrofolate to 10-formyltetrahydrofolate. The sequence is that of Bifunctional protein FolD 2 from Hydrogenovibrio crunogenus (strain DSM 25203 / XCL-2) (Thiomicrospira crunogena).